The following is a 203-amino-acid chain: Cbp/p300-interacting transactivator 1 (203 aa).

Disordered regions lie at residues 1 to 24 (MPTM…DANQ) and 51 to 86 (TANG…PSFN). The segment covering 61–84 (PTSSSGSTSPIGSPTATPSSKPPS) has biased composition (low complexity). Positions 168 to 177 (LMSLVVELGL) match the Nuclear export signal motif.

The protein belongs to the CITED family. As to quaternary structure, homodimer. Binds to RBM14. Interacts (via N-terminus) with HSPA8; the interaction suppresses the association of CITED1 with p300/CBP and SMAD-mediated transcription transactivation. Interacts (via C-terminus) with TOX3 (via HGM box); the interaction increases estrogen-response element (ERE)-dependent transcription and protection against cell death. Interacts with ESR1; the interaction occurs in a estrogen-dependent manner. Interacts (unphosphorylated form preferentially and via C-terminus) with EP300. Interacts (via C-terminus) with CREBBP. Interacts with EGR2. In terms of processing, phosphorylated. Phosphorylation changes in a cell cycle-dependent manner and reduces its transcriptional cofactor activity. As to expression, expressed in calvarial osteoblasts. Expressed in nulliparous mammary epithelial cells; absent in pregnant mice and in lacting mammary glands. Also expressed in mammary tumors (at protein level). Expressed only in melanocytes and testis. Expressed at high levels in the strongly pigmented melanoma cells but at low levels in the weakly pigmented cells.

It localises to the nucleus. Its subcellular location is the cytoplasm. Transcriptional coactivator of the p300/CBP-mediated transcription complex. Enhances SMAD-mediated transcription by strengthening the functional link between the DNA-binding SMAD transcription factors and the p300/CBP transcription coactivator complex. Stimulates estrogen-dependent transactivation activity mediated by estrogen receptors signaling; stabilizes the interaction of estrogen receptor ESR1 and histone acetyltransferase EP300. Positively regulates TGF-beta signaling through its association with the SMAD/p300/CBP-mediated transcriptional coactivator complex. Induces transcription from estrogen-responsive promoters and protection against cell death. Potentiates EGR2-mediated transcriptional activation activity from the ERBB2 promoter. Acts as an inhibitor of osteoblastic mineralization through a cAMP-dependent parathyroid hormone receptor signaling. May play a role in pigmentation of melanocytes. Associates with chromatin to the estrogen-responsive TGF-alpha promoter region in a estrogen-dependent manner. This is Cbp/p300-interacting transactivator 1 (Cited1) from Mus musculus (Mouse).